Reading from the N-terminus, the 986-residue chain is MAKPRVYELAKVLNVDSKTVLEKLKDMGEFVKSASSTIEPPVARRLKAEFAKDNAKGDSKPASSAQKPAAKPVQQRRPAAPSAPASTSSSAPTPAAPARQASPASAHQQAPTPGAPTPRPQGGARPGMPTPGRHGQHDNRENGRDNREGRENGRQSRPNDRRNNDRRNNQGRPNNGQPGQHQNNRDNASAPRPHAQGGAGANGGNAASNAIPRPHAQGPRPGNNPFSRKQGMHTPTPGDIPRPHPMARPTADSGRGGRPGRPGQGQGQGRGFRGGRPGQGGQGGPRPGQWGHNRPGQGGGSQGAGQGGARGGFRGGQGGGNNFQGGGAPSNGPARGGGRGGRGGAAGAFGRQGGKSSKARKNRLAKRHEYEELKAPTIGGVRIPNGNGQTIRLRQGASLADLAEKINVNQAALVTVLFHLGQMATATQSLDEETFQILGGEIGWNIQLVSAEEEDKELLQQFDINLDEEELQDDEDLKPRPPVVTVMGHVDHGKTRLLDTIRKTNVIAREAGGITQRIGAYQVTVNLEGEPRKITFLDTPGHEAFTAMRARGAELTDVAILVVAADDGVMPQTVEAINHAQAAKVPIVVAVNKIDVPGANPEKVRGQLTEFGLVPEEYGGDTMFVDISAKQNLHVDKLLEAVLLTADAELDLRANPDMDARGATVEARLDKGRGAVATVLVQQGTLHVGDAIVAGTSYGRVRAMLDENGQPMEAAGPSTPVQVLGLTSVPTAGDLFLVASDDRAARQIAEKRQATERAAQLAKRRKVVSLEDFKKKFAESEIDMLNIVIKGDSSGSVEALEDSLMKIEVSDEVGIQVIHRGVGAITQNDVNLATVDKAVIIGFNVRPNRQVADLAEREGVEIKYYSVIYRAIEDIEASLKGMLKPEYEEVVTSHSEIREIFRSSKFGNIAGVMVQDGEVKRGTKCRILRNGVATVNDLEISSLRRFKDDVQSVKEGYEAGINLGTFNDIELGDIIETFEMQEVERK.

Basic and acidic residues predominate over residues 49-59 (EFAKDNAKGDS). The tract at residues 49-370 (EFAKDNAKGD…KNRLAKRHEY (322 aa)) is disordered. Low complexity predominate over residues 60–112 (KPASSAQKPAAKPVQQRRPAAPSAPASTSSSAPTPAAPARQASPASAHQQAPT). Residues 135–168 (GQHDNRENGRDNREGRENGRQSRPNDRRNNDRRN) show a composition bias toward basic and acidic residues. Positions 170–182 (QGRPNNGQPGQHQ) are enriched in low complexity. Composition is skewed to gly residues over residues 254-286 (GRGG…GGPR) and 296-353 (GQGG…GRQG). The span at 357–366 (SKARKNRLAK) shows a compositional bias: basic residues. In terms of domain architecture, tr-type G spans 479–651 (PRPPVVTVMG…VLLTADAELD (173 aa)). Residues 488–495 (GHVDHGKT) form a G1 region. 488–495 (GHVDHGKT) contacts GTP. The interval 513–517 (GITQR) is G2. The segment at 538 to 541 (DTPG) is G3. GTP is bound by residues 538–542 (DTPGH) and 592–595 (NKID). The tract at residues 592–595 (NKID) is G4. The interval 628–630 (SAK) is G5.

The protein belongs to the TRAFAC class translation factor GTPase superfamily. Classic translation factor GTPase family. IF-2 subfamily.

The protein resides in the cytoplasm. Functionally, one of the essential components for the initiation of protein synthesis. Protects formylmethionyl-tRNA from spontaneous hydrolysis and promotes its binding to the 30S ribosomal subunits. Also involved in the hydrolysis of GTP during the formation of the 70S ribosomal complex. The sequence is that of Translation initiation factor IF-2 from Bifidobacterium longum subsp. infantis (strain ATCC 15697 / DSM 20088 / JCM 1222 / NCTC 11817 / S12).